The following is a 376-amino-acid chain: uncharacterized protein (376 aa).

It belongs to the glycosyltransferase 28 family.

This is an uncharacterized protein from Methanosarcina mazei (strain ATCC BAA-159 / DSM 3647 / Goe1 / Go1 / JCM 11833 / OCM 88) (Methanosarcina frisia).